Here is a 160-residue protein sequence, read N- to C-terminus: MPSMDIVSETDLEEVRNAVDNANREITTRFDFRGVEASFEWKKPNIILKAEGDFQLKQMCDLLRSQLAKRNVDAKAMAVGDASASGRNWSQQVTFKEGIEQDMAKQLVKLIKGEKLKVQAAIQGEQVRVTGKKRDELQAVMQLVRTAELEQSFQFTNFKD.

This sequence belongs to the YajQ family.

Its function is as follows. Nucleotide-binding protein. The protein is Nucleotide-binding protein CPS_1098 of Colwellia psychrerythraea (strain 34H / ATCC BAA-681) (Vibrio psychroerythus).